Reading from the N-terminus, the 876-residue chain is Vacuolar protein sorting-associated protein 39 homolog (876 aa).

A CNH domain is found at G14–T310. One copy of the CHCR repeat lies at E578 to Y741.

This sequence belongs to the VAM6/VPS39 family. As to quaternary structure, part of the homotypic fusion and vacuole protein sorting (HOPS) complex, composed of Vps16A, car/Vps33A, dor/Vps18, Vps39, Vps11 and lt/Vps41. Interacts with Rab2 (GTP-bound form); the interaction is probably direct.

Its subcellular location is the cytoplasm. It is found in the lysosome membrane. It localises to the late endosome membrane. The protein resides in the late endosome. The protein localises to the lysosome. In terms of biological role, part of the homotypic fusion and vacuole protein sorting (HOPS) tethering complex involved in endo-lysosomal vesicle trafficking and lysosome biogenesis. The HOPS complex facilitates docking and fusion of lysosomes with late endosomes and several other types of vesicles. The HOPS complex is also involved in autophagy and crinophagy (the elimination of unused secretory granules through their fusion with lysosomes). The HOPS complex mediates autophagocitic flux, probably by binding autophagosome-associated Syx17/syntaxin 17, promoting assembly of the trans-SNARE complex and instigating autophagosome-lysosome fusion. Independent of Syx17/syntaxin 17, HOPS is involved in biosynthetic transport to lysosomes and lysosome-related organelles such as eye-pigment granules. Required for autophagocytosis-dependent remodeling of myofibrils and transverse-tubules (T-tubules) during metamorphosis. The chain is Vacuolar protein sorting-associated protein 39 homolog from Drosophila melanogaster (Fruit fly).